A 175-amino-acid polypeptide reads, in one-letter code: Large ribosomal subunit protein uL10 (175 aa).

The protein belongs to the universal ribosomal protein uL10 family. Part of the ribosomal stalk of the 50S ribosomal subunit. The N-terminus interacts with L11 and the large rRNA to form the base of the stalk. The C-terminus forms an elongated spine to which L12 dimers bind in a sequential fashion forming a multimeric L10(L12)X complex.

Its function is as follows. Forms part of the ribosomal stalk, playing a central role in the interaction of the ribosome with GTP-bound translation factors. This chain is Large ribosomal subunit protein uL10, found in Methylobacterium sp. (strain 4-46).